The primary structure comprises 84 residues: Small ribosomal subunit protein bS16 (84 aa).

This sequence belongs to the bacterial ribosomal protein bS16 family.

In Ralstonia pickettii (strain 12J), this protein is Small ribosomal subunit protein bS16.